The sequence spans 240 residues: tRNA pseudouridine synthase B (240 aa).

Aspartate 48 (nucleophile) is an active-site residue.

This sequence belongs to the pseudouridine synthase TruB family. Type 1 subfamily.

The enzyme catalyses uridine(55) in tRNA = pseudouridine(55) in tRNA. Its function is as follows. Responsible for synthesis of pseudouridine from uracil-55 in the psi GC loop of transfer RNAs. This chain is tRNA pseudouridine synthase B, found in Bacteroides thetaiotaomicron (strain ATCC 29148 / DSM 2079 / JCM 5827 / CCUG 10774 / NCTC 10582 / VPI-5482 / E50).